Reading from the N-terminus, the 77-residue chain is Metallothionein-like protein type 2 (77 aa).

This sequence belongs to the metallothionein superfamily. Type 15 family. Expressed in the left, stem and flower, at very low levels in roots and is not detectable in mesophyll protoplasts.

Functionally, metallothioneins have a high content of cysteine residues that bind various heavy metals. The protein is Metallothionein-like protein type 2 (MTI) of Vicia faba (Broad bean).